Reading from the N-terminus, the 514-residue chain is 2,3-bisphosphoglycerate-independent phosphoglycerate mutase (514 aa).

Positions 14 and 64 each coordinate Mn(2+). Residue Ser-64 is the Phosphoserine intermediate of the active site. Substrate contacts are provided by residues His-125, Arg-155–Asp-156, Arg-187, Arg-193, Arg-263–Arg-266, and Lys-336. Mn(2+) contacts are provided by Asp-403, His-407, Asp-444, His-445, and His-463.

Belongs to the BPG-independent phosphoglycerate mutase family. In terms of assembly, monomer. It depends on Mn(2+) as a cofactor.

The catalysed reaction is (2R)-2-phosphoglycerate = (2R)-3-phosphoglycerate. The protein operates within carbohydrate degradation; glycolysis; pyruvate from D-glyceraldehyde 3-phosphate: step 3/5. In terms of biological role, catalyzes the interconversion of 2-phosphoglycerate and 3-phosphoglycerate. In Shewanella oneidensis (strain ATCC 700550 / JCM 31522 / CIP 106686 / LMG 19005 / NCIMB 14063 / MR-1), this protein is 2,3-bisphosphoglycerate-independent phosphoglycerate mutase.